The chain runs to 208 residues: 3-isopropylmalate dehydratase small subunit (208 aa).

Belongs to the LeuD family. LeuD type 1 subfamily. Heterodimer of LeuC and LeuD.

It catalyses the reaction (2R,3S)-3-isopropylmalate = (2S)-2-isopropylmalate. It functions in the pathway amino-acid biosynthesis; L-leucine biosynthesis; L-leucine from 3-methyl-2-oxobutanoate: step 2/4. Catalyzes the isomerization between 2-isopropylmalate and 3-isopropylmalate, via the formation of 2-isopropylmaleate. This Granulibacter bethesdensis (strain ATCC BAA-1260 / CGDNIH1) protein is 3-isopropylmalate dehydratase small subunit.